A 972-amino-acid chain; its full sequence is Optomotor-blind protein (972 aa).

6 disordered regions span residues 44-248, 263-286, 508-563, 645-676, 805-889, and 918-972; these read SLLT…YFPA, PGLY…HAHH, AKGF…HPHA, ADVE…TGSP, AVTP…PSEL, and EEAA…GTDQ. 2 stretches are compositionally biased toward low complexity: residues 49-80 and 97-142; these read GSNN…NTNN and SNHS…NNTS. Residues 155-176 show a composition bias toward pro residues; it reads PPSPAGTPPPTIVGLPPIPPPN. Low complexity-rich tracts occupy residues 177–193 and 201–212; these read NNSS…AAAH and AHHSPSTGAAAP. Residues 213 to 225 are compositionally biased toward pro residues; that stretch reads PAGPTGLPPPTPP. Over residues 226 to 237 the composition is skewed to low complexity; it reads HHLQQQQQQQQH. Basic residues predominate over residues 274 to 286; sequence PPHHPGAHPHAHH. The T-box DNA-binding region spans 332-513; sequence LEGKDLWEKF…NNPFAKGFRD (182 aa). A compositionally biased stretch (gly residues) spans 818 to 831; that stretch reads PPGGGGGGLGGGVV. Residues 835–851 are compositionally biased toward low complexity; it reads PRSLSSSPRPRPASHSP. Residue Ser-887 is modified to Phosphoserine. The segment covering 952 to 963 has biased composition (basic residues); the sequence is HPHHQTHLHSHH.

In terms of tissue distribution, in third-instar larvae, expressed in the brain region that will develop into optic lobes and more weakly in the thoracic part of the ventral ganglion.

Its subcellular location is the nucleus. Essential protein that may function as a transcription regulator. Vital for pupal development. Required for proper development of the optic lobes and wings, and abdominal pigmentation. The polypeptide is Optomotor-blind protein (bi) (Drosophila melanogaster (Fruit fly)).